The chain runs to 381 residues: Estradiol 17-beta-dehydrogenase 2 (381 aa).

The helical; Signal-anchor for type II membrane protein transmembrane segment at 4-24 (FASESAWLCLAAAAVLGGTLL) threads the bilayer. 83–112 (QKAVLVTGADSGFGHGLAKHLDKLGFTVFA) contacts NAD(+). Ser-220 contacts substrate. Catalysis depends on Tyr-233, which acts as the Proton acceptor.

The protein belongs to the short-chain dehydrogenases/reductases (SDR) family. In terms of assembly, homodimer.

It localises to the endoplasmic reticulum membrane. It carries out the reaction 17beta-estradiol + NAD(+) = estrone + NADH + H(+). The enzyme catalyses testosterone + NAD(+) = androst-4-ene-3,17-dione + NADH + H(+). The catalysed reaction is 17beta-hydroxy-5alpha-androstan-3-one + NAD(+) = 5alpha-androstan-3,17-dione + NADH + H(+). It catalyses the reaction (20S)-hydroxypregn-4-en-3-one + NAD(+) = progesterone + NADH + H(+). Catalyzes the NAD-dependent oxidation of highly active 17beta-hydroxysteroids, such as estradiol (E2), testosterone (T), and dihydrotestosterone (DHT), to their less active forms and thus regulates the biological potency of these steroids. Oxidizes estradiol to estrone, testosterone to androstenedione, and dihydrotestosterone to 5alpha-androstan-3,17-dione. Also has 20-alpha-HSD activity. The protein is Estradiol 17-beta-dehydrogenase 2 (Hsd17b2) of Mus musculus (Mouse).